A 104-amino-acid polypeptide reads, in one-letter code: L-rhamnose mutarotase (104 aa).

Tyrosine 18 contributes to the substrate binding site. Histidine 22 functions as the Proton donor in the catalytic mechanism. Substrate is bound by residues tyrosine 41 and 76–77; that span reads WW.

Belongs to the rhamnose mutarotase family. In terms of assembly, homodimer.

Its subcellular location is the cytoplasm. The enzyme catalyses alpha-L-rhamnose = beta-L-rhamnose. The protein operates within carbohydrate metabolism; L-rhamnose metabolism. In terms of biological role, involved in the anomeric conversion of L-rhamnose. This is L-rhamnose mutarotase from Escherichia coli (strain K12 / MC4100 / BW2952).